We begin with the raw amino-acid sequence, 189 residues long: Crossover junction endodeoxyribonuclease RuvC (189 aa).

Active-site residues include Asp12, Glu72, and Asp147. Mg(2+) contacts are provided by Asp12, Glu72, and Asp147.

This sequence belongs to the RuvC family. As to quaternary structure, homodimer which binds Holliday junction (HJ) DNA. The HJ becomes 2-fold symmetrical on binding to RuvC with unstacked arms; it has a different conformation from HJ DNA in complex with RuvA. In the full resolvosome a probable DNA-RuvA(4)-RuvB(12)-RuvC(2) complex forms which resolves the HJ. Mg(2+) is required as a cofactor.

The protein localises to the cytoplasm. The catalysed reaction is Endonucleolytic cleavage at a junction such as a reciprocal single-stranded crossover between two homologous DNA duplexes (Holliday junction).. The RuvA-RuvB-RuvC complex processes Holliday junction (HJ) DNA during genetic recombination and DNA repair. Endonuclease that resolves HJ intermediates. Cleaves cruciform DNA by making single-stranded nicks across the HJ at symmetrical positions within the homologous arms, yielding a 5'-phosphate and a 3'-hydroxyl group; requires a central core of homology in the junction. The consensus cleavage sequence is 5'-(A/T)TT(C/G)-3'. Cleavage occurs on the 3'-side of the TT dinucleotide at the point of strand exchange. HJ branch migration catalyzed by RuvA-RuvB allows RuvC to scan DNA until it finds its consensus sequence, where it cleaves and resolves the cruciform DNA. The sequence is that of Crossover junction endodeoxyribonuclease RuvC from Porphyromonas gingivalis (strain ATCC BAA-308 / W83).